Reading from the N-terminus, the 247-residue chain is Fibroblast growth factor 14 (247 aa).

Disordered stretches follow at residues 1–38 and 214–247; these read MAAA…KNRG and VGET…SKTT. Residues 15-25 show a composition bias toward basic and acidic residues; it reads QAREQHWDRPS.

The protein belongs to the heparin-binding growth factors family. As to quaternary structure, interacts with SCN8A. As to expression, nervous system.

The protein localises to the nucleus. Its function is as follows. Probably involved in nervous system development and function. The polypeptide is Fibroblast growth factor 14 (FGF14) (Homo sapiens (Human)).